The chain runs to 464 residues: Argininosuccinate lyase (464 aa).

The protein belongs to the lyase 1 family. Argininosuccinate lyase subfamily.

It localises to the cytoplasm. The catalysed reaction is 2-(N(omega)-L-arginino)succinate = fumarate + L-arginine. Its pathway is amino-acid biosynthesis; L-arginine biosynthesis; L-arginine from L-ornithine and carbamoyl phosphate: step 3/3. This Pseudomonas aeruginosa (strain ATCC 15692 / DSM 22644 / CIP 104116 / JCM 14847 / LMG 12228 / 1C / PRS 101 / PAO1) protein is Argininosuccinate lyase.